The sequence spans 131 residues: Small ribosomal subunit protein uS8 (131 aa).

This sequence belongs to the universal ribosomal protein uS8 family. As to quaternary structure, part of the 30S ribosomal subunit. Contacts proteins S5 and S12.

One of the primary rRNA binding proteins, it binds directly to 16S rRNA central domain where it helps coordinate assembly of the platform of the 30S subunit. In Campylobacter jejuni (strain RM1221), this protein is Small ribosomal subunit protein uS8.